Reading from the N-terminus, the 273-residue chain is 2,3,4,5-tetrahydropyridine-2,6-dicarboxylate N-succinyltransferase (273 aa).

R106 and D143 together coordinate substrate.

Belongs to the transferase hexapeptide repeat family. Homotrimer.

The protein resides in the cytoplasm. It catalyses the reaction (S)-2,3,4,5-tetrahydrodipicolinate + succinyl-CoA + H2O = (S)-2-succinylamino-6-oxoheptanedioate + CoA. The protein operates within amino-acid biosynthesis; L-lysine biosynthesis via DAP pathway; LL-2,6-diaminopimelate from (S)-tetrahydrodipicolinate (succinylase route): step 1/3. This Wolbachia sp. subsp. Brugia malayi (strain TRS) protein is 2,3,4,5-tetrahydropyridine-2,6-dicarboxylate N-succinyltransferase.